The sequence spans 48 residues: Small, acid-soluble spore protein G (48 aa).

Residues 1 to 16 are compositionally biased toward basic and acidic residues; it reads MSENRHENEENRRDAA. Residues 1–48 are disordered; sequence MSENRHENEENRRDAAVAKVQNSGNAKVVVSVNTDQDQAQAQSQDGED. Positions 35 to 48 are enriched in low complexity; it reads DQDQAQAQSQDGED.

This chain is Small, acid-soluble spore protein G (sspG), found in Bacillus subtilis (strain 168).